The sequence spans 197 residues: Imidazoleglycerol-phosphate dehydratase (197 aa).

The protein belongs to the imidazoleglycerol-phosphate dehydratase family.

The protein localises to the cytoplasm. The catalysed reaction is D-erythro-1-(imidazol-4-yl)glycerol 3-phosphate = 3-(imidazol-4-yl)-2-oxopropyl phosphate + H2O. It participates in amino-acid biosynthesis; L-histidine biosynthesis; L-histidine from 5-phospho-alpha-D-ribose 1-diphosphate: step 6/9. This is Imidazoleglycerol-phosphate dehydratase from Nitrosomonas europaea (strain ATCC 19718 / CIP 103999 / KCTC 2705 / NBRC 14298).